The sequence spans 397 residues: Oxysterol-binding protein homolog C354.07c (397 aa).

2 N-linked (GlcNAc...) asparagine glycosylation sites follow: N186 and N195.

Belongs to the OSBP family.

Its subcellular location is the endoplasmic reticulum. The polypeptide is Oxysterol-binding protein homolog C354.07c (Schizosaccharomyces pombe (strain 972 / ATCC 24843) (Fission yeast)).